We begin with the raw amino-acid sequence, 199 residues long: N-(5'-phosphoribosyl)anthranilate isomerase (199 aa).

This sequence belongs to the TrpF family.

The catalysed reaction is N-(5-phospho-beta-D-ribosyl)anthranilate = 1-(2-carboxyphenylamino)-1-deoxy-D-ribulose 5-phosphate. It participates in amino-acid biosynthesis; L-tryptophan biosynthesis; L-tryptophan from chorismate: step 3/5. In Sulfolobus acidocaldarius (strain ATCC 33909 / DSM 639 / JCM 8929 / NBRC 15157 / NCIMB 11770), this protein is N-(5'-phosphoribosyl)anthranilate isomerase.